A 109-amino-acid polypeptide reads, in one-letter code: U26-theraphotoxin-Cg1a (109 aa).

An N-terminal signal peptide occupies residues 1–18 (MNTIIPLLLLSLLITVYA). Residues 19–67 (YALEDGNKEEIQDIAESEFEASNEMLQLAHLLEADRAETEEDRNSRQKR) constitute a propeptide that is removed on maturation. Intrachain disulfides connect cysteine 68-cysteine 83, cysteine 75-cysteine 88, and cysteine 82-cysteine 103.

The protein belongs to the neurotoxin 14 (magi-1) family. 07 (Jztx-56) subfamily. In terms of tissue distribution, expressed by the venom gland.

It localises to the secreted. Functionally, probable ion channel inhibitor. The chain is U26-theraphotoxin-Cg1a from Chilobrachys guangxiensis (Chinese earth tiger tarantula).